Reading from the N-terminus, the 396-residue chain is Flavohemoprotein (396 aa).

The Globin domain maps to 1-136; that stretch reads MLDNQTIATV…LADIFINREE (136 aa). His-85 is a heme b binding site. Catalysis depends on charge relay system residues Tyr-95 and Glu-135. A reductase region spans residues 147 to 396; the sequence is GGWRGLRPFR…YECFGPHKVI (250 aa). Residues 150–255 form the FAD-binding FR-type domain; sequence RGLRPFRINR…TAPRGDFFLD (106 aa). Residues Tyr-188 and 204-207 each bind FAD; that span reads RQYS. 268–273 is an NADP(+) binding site; that stretch reads GVGLTP. FAD is bound at residue 389-392; sequence CFGP.

The protein belongs to the globin family. Two-domain flavohemoproteins subfamily. This sequence in the C-terminal section; belongs to the flavoprotein pyridine nucleotide cytochrome reductase family. It depends on heme b as a cofactor. Requires FAD as cofactor.

The enzyme catalyses 2 nitric oxide + NADPH + 2 O2 = 2 nitrate + NADP(+) + H(+). The catalysed reaction is 2 nitric oxide + NADH + 2 O2 = 2 nitrate + NAD(+) + H(+). In terms of biological role, is involved in NO detoxification in an aerobic process, termed nitric oxide dioxygenase (NOD) reaction that utilizes O(2) and NAD(P)H to convert NO to nitrate, which protects the bacterium from various noxious nitrogen compounds. Therefore, plays a central role in the inducible response to nitrosative stress. The sequence is that of Flavohemoprotein from Photorhabdus laumondii subsp. laumondii (strain DSM 15139 / CIP 105565 / TT01) (Photorhabdus luminescens subsp. laumondii).